Consider the following 72-residue polypeptide: Palustrin-2CG1 (72 aa).

Positions 1-22 (MFTMKKPLLLLFFLGTISLSLC) are cleaved as a signal peptide. A propeptide spans 23-39 (QEERGADEDDGEMTEEV) (removed in mature form). Residues C64 and C70 are joined by a disulfide bond.

As to expression, expressed by the skin glands.

It is found in the secreted. In terms of biological role, antimicrobial peptide active against a variety of Gram-positive and some Gram-negative bacterial strains. Has antifungal activity against a slime mold isolate. Has hemolytic activity against human erythrocytes. This Amolops chunganensis (Chungan torrent frog) protein is Palustrin-2CG1.